The following is a 968-amino-acid chain: Alanine--tRNA ligase, cytoplasmic (968 aa).

Met1 carries the post-translational modification N-acetylmethionine. Ser3 and Ser8 each carry phosphoserine. The residue at position 19 (Lys19) is an N6-acetyllysine. ATP contacts are provided by residues Arg77, His95, Trp176, and 214-216 (IWN). Asn216 and Asp239 together coordinate L-alanine. Residue Gly243 participates in ATP binding. Ser399 and Ser555 each carry phosphoserine. Positions 605, 609, 723, and 727 each coordinate Zn(2+). A Nuclear localization signal motif is present at residues 750–763 (RRIVAVTGAEAQKA). Lys876 is subject to N6-acetyllysine. At Lys943 the chain carries N6,N6,N6-trimethyllysine; alternate. At Lys943 the chain carries N6,N6-dimethyllysine; alternate. Lys943 is modified (N6-methyllysine; alternate).

This sequence belongs to the class-II aminoacyl-tRNA synthetase family. As to quaternary structure, monomer. Interacts with ANKRD16; the interaction is direct. Zn(2+) is required as a cofactor. Post-translationally, ISGylated. In terms of processing, methylation at 'Lys-943' by METTL21C.

The protein localises to the cytoplasm. Its subcellular location is the nucleus. The enzyme catalyses tRNA(Ala) + L-alanine + ATP = L-alanyl-tRNA(Ala) + AMP + diphosphate. It catalyses the reaction (S)-lactate + ATP + H(+) = (S)-lactoyl-AMP + diphosphate. It carries out the reaction (S)-lactoyl-AMP + L-lysyl-[protein] = N(6)-[(S)-lactoyl]-L-lysyl-[protein] + AMP + 2 H(+). With respect to regulation, the protein lactyltransferase activity is inhibited by beta-alanine. Functionally, catalyzes the attachment of alanine to tRNA(Ala) in a two-step reaction: alanine is first activated by ATP to form Ala-AMP and then transferred to the acceptor end of tRNA(Ala). Also edits incorrectly charged tRNA(Ala) via its editing domain. In presence of high levels of lactate, also acts as a protein lactyltransferase that mediates lactylation of lysine residues in target proteins, such as TEAD1, TP53/p53 and YAP1. Protein lactylation takes place in a two-step reaction: lactate is first activated by ATP to form lactate-AMP and then transferred to lysine residues of target proteins. Acts as an inhibitor of TP53/p53 activity by catalyzing lactylation of TP53/p53. Acts as a positive regulator of the Hippo pathway by mediating lactylation of TEAD1 and YAP1. This is Alanine--tRNA ligase, cytoplasmic from Homo sapiens (Human).